We begin with the raw amino-acid sequence, 1331 residues long: Lysine-specific demethylase 3A-A (1331 aa).

3 disordered regions span residues 243–280, 358–381, and 497–532; these read LNDK…PSKD, TPPQ…TQNL, and KVVK…VTYP. Over residues 266 to 280 the composition is skewed to basic and acidic residues; that stretch reads TELKQTRNEEVPSKD. The segment at 683–708 adopts a C6-type zinc-finger fold; sequence CDACDTTIFNLHWVCPKCGFGVCVDC. Positions 894 to 898 match the LXXLL motif motif; the sequence is LRNLL. Positions 1086 to 1291 constitute a JmjC domain; the sequence is RREGKLNLAA…HCFWLTQEFR (206 aa). Fe cation contacts are provided by histidine 1130, aspartate 1132, and histidine 1259.

This sequence belongs to the JHDM2 histone demethylase family. Fe(2+) is required as a cofactor.

The protein resides in the cytoplasm. Its subcellular location is the nucleus. The enzyme catalyses N(6),N(6)-dimethyl-L-lysyl(9)-[histone H3] + 2 2-oxoglutarate + 2 O2 = L-lysyl(9)-[histone H3] + 2 formaldehyde + 2 succinate + 2 CO2. Functionally, histone demethylase that specifically demethylates 'Lys-9' of histone H3, thereby playing a central role in histone code. Preferentially demethylates mono- and dimethylated H3 'Lys-9' residue, with a preference for dimethylated residue, while it has weak or no activity on trimethylated H3 'Lys-9'. Demethylation of Lys residue generates formaldehyde and succinate. The sequence is that of Lysine-specific demethylase 3A-A (kdm3a-a) from Xenopus laevis (African clawed frog).